The following is a 2890-amino-acid chain: Bifunctional DNA-directed RNA polymerase subunit beta-beta' (2890 aa).

Residues 1 to 1377 (MSKKIPLKNR…DINIFGDDVD (1377 aa)) are DNA-directed RNA polymerase subunit beta. The segment at 1384–2890 (PIMIKEDDRP…LRALEDNSKF (1507 aa)) is DNA-directed RNA polymerase subunit beta'. The Zn(2+) site is built by cysteine 1449, cysteine 1451, cysteine 1465, and cysteine 1468. Mg(2+)-binding residues include aspartate 1849, aspartate 1851, and aspartate 1853. Positions 2179, 2253, 2260, and 2263 each coordinate Zn(2+).

In the N-terminal section; belongs to the RNA polymerase beta chain family. The protein in the C-terminal section; belongs to the RNA polymerase beta' chain family. In terms of assembly, the RNAP catalytic core consists of 2 alpha, 1 beta/beta' and 1 omega subunit. When a sigma factor is associated with the core the holoenzyme is formed, which can initiate transcription. Mg(2+) is required as a cofactor. The cofactor is Zn(2+).

The enzyme catalyses RNA(n) + a ribonucleoside 5'-triphosphate = RNA(n+1) + diphosphate. Its function is as follows. DNA-dependent RNA polymerase catalyzes the transcription of DNA into RNA using the four ribonucleoside triphosphates as substrates. This Helicobacter pylori (strain J99 / ATCC 700824) (Campylobacter pylori J99) protein is Bifunctional DNA-directed RNA polymerase subunit beta-beta' (rpoBC).